The following is a 201-amino-acid chain: Translation machinery-associated protein 22 (201 aa).

One can recognise an SUI1 domain in the interval 104 to 175 (VTVKRIERNK…EIKEFIVEKY (72 aa)).

The protein belongs to the DENR family. In terms of assembly, interacts with the 40S ribosomal subunit.

The protein resides in the cytoplasm. The sequence is that of Translation machinery-associated protein 22 (TMA22) from Pyricularia oryzae (strain 70-15 / ATCC MYA-4617 / FGSC 8958) (Rice blast fungus).